A 320-amino-acid chain; its full sequence is Probable movement protein (320 aa).

Residues H144, D171, and S199 contribute to the active site. Disordered regions lie at residues 251 to 270 (RRSR…QEKR) and 286 to 320 (EFGR…GSSP).

Belongs to the tobamoviruses movement protein family.

Its function is as follows. May play a role in virus cell to cell movement by increasing the size exclusion limit of plasmodesmata and forming a complex with viral RNA to assist its movement. May also have a papain-like protease activity and cleave the genome polyprotein. This Malus sylvestris (European crab apple) protein is Probable movement protein.